The chain runs to 931 residues: Beta-mannosidase A (931 aa).

The N-terminal stretch at 1–21 is a signal peptide; that stretch reads MRHSIGLAAALLAPTLPVALG. N-linked (GlcNAc...) asparagine glycosylation is found at N40, N79, N247, N282, and N347. Catalysis depends on E479, which acts as the Proton donor. N-linked (GlcNAc...) asparagine glycosylation is found at N550, N608, N658, N738, N790, N798, N830, and N918.

This sequence belongs to the glycosyl hydrolase 2 family. Beta-mannosidase A subfamily. In terms of assembly, homodimer. N-glycosylated.

The protein localises to the secreted. It catalyses the reaction Hydrolysis of terminal, non-reducing beta-D-mannose residues in beta-D-mannosides.. It participates in glycan metabolism; N-glycan degradation. Exoglycosidase that cleaves the single beta-linked mannose residue from the non-reducing end of beta-mannosidic oligosaccharides of various complexity and length. Involved in the degradation of polymeric mannan and galactomannan. Releases the terminal mannose residue from mannobiose and mannotriose, as well as from galactosyl-mannobiose (GM2), galactosyl-mannotriose (GM3) and di-galactosyl-mannopentaose (G2M5). This Aspergillus niger protein is Beta-mannosidase A (mndA).